The following is a 737-amino-acid chain: DNA topoisomerase 4 subunit A (737 aa).

The Topo IIA-type catalytic domain occupies 32–496; it reads LPDVRDGLKP…SFEEVTLTNQ (465 aa). Residue Y120 is the O-(5'-phospho-DNA)-tyrosine intermediate of the active site.

Belongs to the type II topoisomerase GyrA/ParC subunit family. ParC type 1 subfamily. Heterotetramer composed of ParC and ParE.

The protein resides in the cell membrane. It carries out the reaction ATP-dependent breakage, passage and rejoining of double-stranded DNA.. Its function is as follows. Topoisomerase IV is essential for chromosome segregation. It relaxes supercoiled DNA. Performs the decatenation events required during the replication of a circular DNA molecule. The chain is DNA topoisomerase 4 subunit A from Rickettsia felis (strain ATCC VR-1525 / URRWXCal2) (Rickettsia azadi).